The sequence spans 1058 residues: Carbamoyl phosphate synthase large chain (1058 aa).

Residues 1–401 are carboxyphosphate synthetic domain; the sequence is MPKRTDIQKI…SLLKACRSLE (401 aa). ATP-binding residues include Arg-129, Arg-169, Gly-175, Gly-176, Arg-208, Ile-210, Glu-215, Gly-241, Ile-242, His-243, Gln-284, and Glu-298. The region spanning 133 to 327 is the ATP-grasp 1 domain; it reads KQLMEELEQP…IAKLAAKIAV (195 aa). Gln-284, Glu-298, and Asn-300 together coordinate Mg(2+). Gln-284, Glu-298, and Asn-300 together coordinate Mn(2+). The interval 402 to 546 is oligomerization domain; the sequence is IGVHHNEIPE…YSTYGWENES (145 aa). A carbamoyl phosphate synthetic domain region spans residues 547–929; that stretch reads IKSDKESVLV…ALYKAFEASY (383 aa). Positions 671-861 constitute an ATP-grasp 2 domain; that stretch reads EQALKELDIP…MAQVATKLIL (191 aa). Positions 707, 746, 748, 752, 777, 778, 779, 780, 820, and 832 each coordinate ATP. Mg(2+)-binding residues include Gln-820, Glu-832, and Asn-834. Positions 820, 832, and 834 each coordinate Mn(2+). Residues 930 to 1058 form the MGS-like domain; it reads LHLPTFGNVV…ESRSFVTEAI (129 aa). Positions 930–1058 are allosteric domain; sequence LHLPTFGNVV…ESRSFVTEAI (129 aa).

The protein belongs to the CarB family. Composed of two chains; the small (or glutamine) chain promotes the hydrolysis of glutamine to ammonia, which is used by the large (or ammonia) chain to synthesize carbamoyl phosphate. Tetramer of heterodimers (alpha,beta)4. Mg(2+) is required as a cofactor. Mn(2+) serves as cofactor.

The enzyme catalyses hydrogencarbonate + L-glutamine + 2 ATP + H2O = carbamoyl phosphate + L-glutamate + 2 ADP + phosphate + 2 H(+). It carries out the reaction hydrogencarbonate + NH4(+) + 2 ATP = carbamoyl phosphate + 2 ADP + phosphate + 2 H(+). It participates in amino-acid biosynthesis; L-arginine biosynthesis; carbamoyl phosphate from bicarbonate: step 1/1. It functions in the pathway pyrimidine metabolism; UMP biosynthesis via de novo pathway; (S)-dihydroorotate from bicarbonate: step 1/3. Its function is as follows. Large subunit of the glutamine-dependent carbamoyl phosphate synthetase (CPSase). CPSase catalyzes the formation of carbamoyl phosphate from the ammonia moiety of glutamine, carbonate, and phosphate donated by ATP, constituting the first step of 2 biosynthetic pathways, one leading to arginine and/or urea and the other to pyrimidine nucleotides. The large subunit (synthetase) binds the substrates ammonia (free or transferred from glutamine from the small subunit), hydrogencarbonate and ATP and carries out an ATP-coupled ligase reaction, activating hydrogencarbonate by forming carboxy phosphate which reacts with ammonia to form carbamoyl phosphate. In Streptococcus pneumoniae (strain ATCC 700669 / Spain 23F-1), this protein is Carbamoyl phosphate synthase large chain.